A 286-amino-acid chain; its full sequence is uncharacterized protein (286 aa).

This is an uncharacterized protein from Acidianus convivator (ATV).